Consider the following 1049-residue polypeptide: MSTWSSMLADLRKQAEIAKQQAKKGIDVTKNGLQYGVSQVKLQALAAGKSIQKYGNKLVLVIPKDYDVNTGNGFFDLAKAAEELGIQVKYIDRNDLEIAHKSLGVTDQFLGLTERGLTLFAPQLDKFLQQHSKISNVVGSSTGDTVNKLAKSQAIISGVQSVLGSVLAGINLNEAIISGGSELELAKAGVDLASELVGNIAKGTATIEAFSEQIQNFGKLVQNAKGLGGVGQQLQHISGSALSKTGLGLDIISSLLSGVTASFTLADKNASTSTKVAAGFELSNQVIGGITKAVSSYILAQRLAAGLSTTGPAAALIASSISLAISPLSFLRVADNFNRSKDIREFAERFKKLGYEGDKLLSDFYHEAGTIDASITTISTALSAIAAGTAAASAGALVGAPITLLVTGITGLISGILEFSKQPMLEHVASKLGTKIEEWERKYGKNYFENGYDARHKAFLEDSLSLLSSFNKQYETERAVLITQQRWDEYIGELAGVTGKGDKISSGKAYVDYFEEGKLLAKKPDDFNRVILDPKKGKIDISNSQTSTLLKFVTPLLTPGTESRKRTQTGKYEYVTKLDVNGINQWEVNGVKEKGAVYDFTNLIQHVHISSSVARGEEYREVRLVSRLGKGNDKVFLASGSAEIHAGDGHDVVYYDKTDTGLLMVDGTQATKQGDYTVTRELSGATQILREVVKNQKSSVGSRQETVEYRDNELAQSGNSNLKAKDNLYSVEEIIGSNHRDEFKGSKFRDIFHGADGDDLLNGNDGDDILYGDKGNDELRGDNGNDQLYGGEGNDKLFGGNGNNYLSGGDGDDELQVLGNGFNVLRGGKGNDKLYGGAGSDFLDGGEGDDYLAGGEGNDFYVYRSTSGNHTIYDQGKSSDSDTLYLSDLTFDRLLVEKVDNNLVFKPSDHNSNRGSLTIKDWFKTGHGYNHKLEQIVDKNGRKLTSDNLETHFNGTPKTNLLGYTAENQNESNLSSLKTELGKIISSAGNFGLAKQGNNNHSAALNNDVDKLISSASSFATAQMGGSGIGLLPSNNANSTILSGLARTA.

4 helical membrane-spanning segments follow: residues 246-266 (GLGL…FTLA), 311-331 (GPAA…LSFL), 375-395 (ITTI…ASAG), and 397-417 (LVGA…SGIL). 6 Hemolysin-type calcium-binding repeats span residues 744-761 (KGSK…DDLL), 762-779 (NGND…NDEL), 780-797 (RGDN…NDKL), 798-815 (FGGN…DDEL), 826-843 (RGGK…SDFL), and 844-861 (DGGE…NDFY).

It belongs to the RTX prokaryotic toxin (TC 1.C.11) family.

Its subcellular location is the secreted. The protein resides in the host cell membrane. PaxA is associated with abortion cases in swine and septicemia in young piglets. Shows cohemolytic activity with the sphingomyelinase of S.aureus but is devoid of direct hemolytic activity. The chain is Exotoxin PaxA (paxA) from Pasteurella aerogenes.